The sequence spans 325 residues: MINIDPHFIHNLTNKLKTFDNFSLYVHVNPDFDAFGAAFAFKAFLAVYFPHKKAYVMGSHNIKADGKDLFPFEAAPIDDAFVKNSLAIIFDTSNQERVLTQKHKLAKETVRIDHHPKTESFADLEWIDPAFSAAAEMVGYLILQMGYELNAEMAAYIYAGIITDTQRFSSSATTPQTFALTAKLLETGFNRNKVHDAVYLKPLLEHKYFSYVLNKAKITPNGLAYALLKKGTYKQFGVVSPLPMVHALNNIKGVKIWTTCYFNEDIKKWIGSIRSRSIPINNFAQMFGGGGHKYAAAFVLDDKRQFMKLVEIMDDFLAKQKHVNS.

Belongs to the mgp1/MG371 family.

This is an uncharacterized protein from Mycoplasma pneumoniae (strain ATCC 29342 / M129 / Subtype 1) (Mycoplasmoides pneumoniae).